Here is a 479-residue protein sequence, read N- to C-terminus: 3-phytase B (479 aa).

Positions 1–19 are cleaved as a signal peptide; that stretch reads MPRTSLLTLACALATGASA. Catalysis depends on H82, which acts as the Nucleophile. Residues N106, N191, N227, N250, and N315 are each glycosylated (N-linked (GlcNAc...) asparagine). Residue D338 is the Proton donor of the active site. Residues N425, N442, and N458 are each glycosylated (N-linked (GlcNAc...) asparagine).

It belongs to the histidine acid phosphatase family.

The enzyme catalyses 1D-myo-inositol hexakisphosphate + H2O = 1D-myo-inositol 1,2,4,5,6-pentakisphosphate + phosphate. Its function is as follows. Catalyzes the hydrolysis of inorganic orthophosphate from phytate. In Aspergillus niger, this protein is 3-phytase B (phyB).